A 239-amino-acid polypeptide reads, in one-letter code: Fumarate reductase iron-sulfur subunit (239 aa).

The 2Fe-2S ferredoxin-type domain maps to 5-95 (LTIRVFKYDP…DGVITLLPLP (91 aa)). The [2Fe-2S] cluster site is built by cysteine 57, cysteine 62, cysteine 65, and cysteine 77. A 4Fe-4S ferredoxin-type domain is found at 142–171 (AQEVFELDRCIECGCCIAACGTKIMREDFV). 3 residues coordinate [4Fe-4S] cluster: cysteine 151, cysteine 154, and cysteine 157. Positions 161, 208, and 214 each coordinate [3Fe-4S] cluster. Residue cysteine 218 participates in [4Fe-4S] cluster binding.

It belongs to the succinate dehydrogenase/fumarate reductase iron-sulfur protein family. Part of an enzyme complex containing three subunits: a flavoprotein (frdA), an iron-sulfur protein (frdB), and diheme cytochrome b (frdC). [2Fe-2S] cluster serves as cofactor. The cofactor is [3Fe-4S] cluster. [4Fe-4S] cluster is required as a cofactor.

The protein resides in the cell inner membrane. The catalysed reaction is a menaquinone + succinate = a menaquinol + fumarate. In terms of biological role, the fumarate reductase enzyme complex is required for fumarate respiration using formate or sulfide as electron donor. This chain is Fumarate reductase iron-sulfur subunit (frdB), found in Wolinella succinogenes (strain ATCC 29543 / DSM 1740 / CCUG 13145 / JCM 31913 / LMG 7466 / NCTC 11488 / FDC 602W) (Vibrio succinogenes).